Reading from the N-terminus, the 1104-residue chain is Carbamoyl phosphate synthase large chain (1104 aa).

A carboxyphosphate synthetic domain region spans residues 1-402 (MPRRTDLKSV…ALQKALRSTE (402 aa)). Arginine 129, arginine 169, glycine 175, glycine 176, glutamate 208, isoleucine 210, glutamate 215, glycine 241, valine 242, histidine 243, glutamine 285, and glutamate 299 together coordinate ATP. Residues 133–328 (KGVVERCGAE…IAKIAARLAV (196 aa)) enclose the ATP-grasp 1 domain. The Mg(2+) site is built by glutamine 285, glutamate 299, and asparagine 301. Mn(2+) is bound by residues glutamine 285, glutamate 299, and asparagine 301. Residues 403 to 547 (KRGATFSWAG…YSSYDEEDET (145 aa)) are oligomerization domain. Positions 548–948 (RPREKAAIVI…AFGKSQTAAY (401 aa)) are carbamoyl phosphate synthetic domain. Positions 676–867 (GQVLERAGLV…LAKAAARLMA (192 aa)) constitute an ATP-grasp 2 domain. 10 residues coordinate ATP: arginine 712, arginine 751, leucine 753, glutamate 758, glycine 783, isoleucine 784, histidine 785, serine 786, glutamine 826, and glutamate 838. Mg(2+)-binding residues include glutamine 826, glutamate 838, and asparagine 840. Positions 826, 838, and 840 each coordinate Mn(2+). The MGS-like domain maps to 949 to 1099 (GGLPTAGTAF…QEHTARLNAA (151 aa)). Positions 949–1104 (GGLPTAGTAF…RLNAAWEGRA (156 aa)) are allosteric domain.

This sequence belongs to the CarB family. As to quaternary structure, composed of two chains; the small (or glutamine) chain promotes the hydrolysis of glutamine to ammonia, which is used by the large (or ammonia) chain to synthesize carbamoyl phosphate. Tetramer of heterodimers (alpha,beta)4. It depends on Mg(2+) as a cofactor. Mn(2+) is required as a cofactor.

The enzyme catalyses hydrogencarbonate + L-glutamine + 2 ATP + H2O = carbamoyl phosphate + L-glutamate + 2 ADP + phosphate + 2 H(+). It carries out the reaction hydrogencarbonate + NH4(+) + 2 ATP = carbamoyl phosphate + 2 ADP + phosphate + 2 H(+). Its pathway is amino-acid biosynthesis; L-arginine biosynthesis; carbamoyl phosphate from bicarbonate: step 1/1. The protein operates within pyrimidine metabolism; UMP biosynthesis via de novo pathway; (S)-dihydroorotate from bicarbonate: step 1/3. Large subunit of the glutamine-dependent carbamoyl phosphate synthetase (CPSase). CPSase catalyzes the formation of carbamoyl phosphate from the ammonia moiety of glutamine, carbonate, and phosphate donated by ATP, constituting the first step of 2 biosynthetic pathways, one leading to arginine and/or urea and the other to pyrimidine nucleotides. The large subunit (synthetase) binds the substrates ammonia (free or transferred from glutamine from the small subunit), hydrogencarbonate and ATP and carries out an ATP-coupled ligase reaction, activating hydrogencarbonate by forming carboxy phosphate which reacts with ammonia to form carbamoyl phosphate. The protein is Carbamoyl phosphate synthase large chain of Kineococcus radiotolerans (strain ATCC BAA-149 / DSM 14245 / SRS30216).